The primary structure comprises 147 residues: MALRACGLIIFRRHLIPKMDNSTIEFLLLQASDGIHHWTPPKGHVDPGENDLETALRETREETGIEASQLTIIEGFRRELNYVARQKPKTVIYWLAEVKDYNVEIRLSQEHQAYRWLGLEEACQLAQFKEMKATLQEGHQFLCSTPA.

Ala-2 is subject to N-acetylalanine. The region spanning 2–139 is the Nudix hydrolase domain; that stretch reads ALRACGLIIF…EMKATLQEGH (138 aa). Positions 43 to 64 match the Nudix box motif; sequence GHVDPGENDLETALRETREETG.

Belongs to the Nudix hydrolase family. It depends on a divalent metal cation as a cofactor.

It catalyses the reaction P(1),P(4)-bis(5'-guanosyl) tetraphosphate + H2O = GMP + GTP + 2 H(+). It carries out the reaction a 5'-end CoA-ribonucleoside in mRNA + H2O = a 5'-end phospho-adenosine-phospho-ribonucleoside in mRNA + (R)-4'-phosphopantetheine + 2 H(+). The catalysed reaction is a 5'-end FAD-phospho-ribonucleoside in mRNA + H2O = a 5'-end phospho-adenosine-phospho-ribonucleoside in mRNA + FMN + 2 H(+). Functionally, catalyzes the asymmetric hydrolysis of diadenosine 5',5'''-P1,P4-tetraphosphate (Ap4A) to yield AMP and ATP. Exhibits decapping activity towards FAD-capped RNAs and dpCoA-capped RNAs in vitro. The sequence is that of Bis(5'-nucleosyl)-tetraphosphatase [asymmetrical] (Nudt2) from Mus musculus (Mouse).